A 491-amino-acid chain; its full sequence is GTPase Der (491 aa).

2 consecutive EngA-type G domains span residues 3 to 166 and 200 to 373; these read PVVA…AEAM and IKLA…DSAT. GTP-binding positions include 9–16, 56–60, 118–121, 206–213, 253–257, and 318–321; these read GRPNVGKS, DTGGI, NKVD, GKPNVGKS, DTAGV, and NKWD. In terms of domain architecture, KH-like spans 374 to 458; that stretch reads RRVSTSMLTR…PIQIRFQEGD (85 aa). The segment at 472-491 is disordered; that stretch reads QERRRKRALSHINDRKTKGE.

This sequence belongs to the TRAFAC class TrmE-Era-EngA-EngB-Septin-like GTPase superfamily. EngA (Der) GTPase family. In terms of assembly, associates with the 50S ribosomal subunit.

Functionally, GTPase that plays an essential role in the late steps of ribosome biogenesis. In Shewanella denitrificans (strain OS217 / ATCC BAA-1090 / DSM 15013), this protein is GTPase Der.